An 87-amino-acid polypeptide reads, in one-letter code: Acyl-CoA-binding protein (87 aa).

Positions 3 to 87 (LKEEFEEHAV…KVKQLLEESA (85 aa)) constitute an ACB domain. Residues 30-34 (YGLYK), Lys-56, and Tyr-75 each bind an acyl-CoA.

Belongs to the ACBP family.

Binds medium- and long-chain acyl-CoA esters with very high affinity and may function as an intracellular carrier of acyl-CoA esters. In Fritillaria agrestis (Stinkbells), this protein is Acyl-CoA-binding protein (ACABP).